A 399-amino-acid chain; its full sequence is Galactokinase (399 aa).

Position 42–45 (42–45 (EHTD)) interacts with substrate. ATP is bound by residues Ser76 and 133 to 139 (ASGLSSS). 2 residues coordinate Mg(2+): Ser139 and Glu171. The active-site Proton acceptor is Asp183. Tyr233 is a substrate binding site.

Belongs to the GHMP kinase family. GalK subfamily.

Its subcellular location is the cytoplasm. It catalyses the reaction alpha-D-galactose + ATP = alpha-D-galactose 1-phosphate + ADP + H(+). It participates in carbohydrate metabolism; galactose metabolism. Catalyzes the transfer of the gamma-phosphate of ATP to D-galactose to form alpha-D-galactose-1-phosphate (Gal-1-P). The chain is Galactokinase from Lactococcus lactis subsp. cremoris (strain MG1363).